A 214-amino-acid polypeptide reads, in one-letter code: Killer cell lectin-like receptor subfamily B member 1 (214 aa).

Over 1–42 the chain is Cytoplasmic; it reads MDAPVLYAELHLANTQGLRCTSPPSPRQDACWGSGWHRVALK. The helical; Signal-anchor for type II membrane protein transmembrane segment at 43-63 threads the bilayer; that stretch reads LGCVGLILLLMGLSVLVGFLV. Topologically, residues 64-214 are extracellular; that stretch reads QKPPIEKCSV…WICQKTLKRV (151 aa). Positions 98–208 constitute a C-type lectin domain; the sequence is HWNKCLFISQ…CSSDNHWICQ (111 aa). 2 cysteine pairs are disulfide-bonded: Cys119-Cys207 and Cys186-Cys199.

It is found in the membrane. The protein is Killer cell lectin-like receptor subfamily B member 1 (Klrb1) of Rattus norvegicus (Rat).